The sequence spans 545 residues: Glucose-6-phosphate isomerase (545 aa).

The active-site Proton donor is E351. Active-site residues include H382 and K510.

Belongs to the GPI family.

It localises to the cytoplasm. The enzyme catalyses alpha-D-glucose 6-phosphate = beta-D-fructose 6-phosphate. The protein operates within carbohydrate biosynthesis; gluconeogenesis. It participates in carbohydrate degradation; glycolysis; D-glyceraldehyde 3-phosphate and glycerone phosphate from D-glucose: step 2/4. Its function is as follows. Catalyzes the reversible isomerization of glucose-6-phosphate to fructose-6-phosphate. The protein is Glucose-6-phosphate isomerase of Shewanella baltica (strain OS185).